We begin with the raw amino-acid sequence, 288 residues long: ATP synthase gamma chain (288 aa).

It belongs to the ATPase gamma chain family. F-type ATPases have 2 components, CF(1) - the catalytic core - and CF(0) - the membrane proton channel. CF(1) has five subunits: alpha(3), beta(3), gamma(1), delta(1), epsilon(1). CF(0) has three main subunits: a, b and c.

It is found in the cell membrane. In terms of biological role, produces ATP from ADP in the presence of a proton gradient across the membrane. The gamma chain is believed to be important in regulating ATPase activity and the flow of protons through the CF(0) complex. The protein is ATP synthase gamma chain of Staphylococcus aureus (strain Mu3 / ATCC 700698).